The sequence spans 185 residues: Small ribosomal subunit protein uS5 (185 aa).

One can recognise an S5 DRBM domain in the interval 18–81 (FVDKLVHINR…ESAKRALIRV (64 aa)).

This sequence belongs to the universal ribosomal protein uS5 family. As to quaternary structure, part of the 30S ribosomal subunit. Contacts proteins S4 and S8.

Functionally, with S4 and S12 plays an important role in translational accuracy. Located at the back of the 30S subunit body where it stabilizes the conformation of the head with respect to the body. This chain is Small ribosomal subunit protein uS5, found in Azorhizobium caulinodans (strain ATCC 43989 / DSM 5975 / JCM 20966 / LMG 6465 / NBRC 14845 / NCIMB 13405 / ORS 571).